A 189-amino-acid polypeptide reads, in one-letter code: Small ribosomal subunit protein uS5 (189 aa).

The S5 DRBM domain maps to 22-85; that stretch reads LIDKLVTINR…ERAKRGMIRV (64 aa). The tract at residues 164–189 is disordered; it reads SVASRRGKKVADLFGPKREKEAPADV. Residues 172 to 189 show a composition bias toward basic and acidic residues; it reads KVADLFGPKREKEAPADV.

This sequence belongs to the universal ribosomal protein uS5 family. Part of the 30S ribosomal subunit. Contacts proteins S4 and S8.

In terms of biological role, with S4 and S12 plays an important role in translational accuracy. Located at the back of the 30S subunit body where it stabilizes the conformation of the head with respect to the body. The chain is Small ribosomal subunit protein uS5 from Acidiphilium cryptum (strain JF-5).